Reading from the N-terminus, the 206-residue chain is Two-component response regulator ARR15 (206 aa).

In terms of domain architecture, Response regulatory spans 19 to 146; the sequence is HVLAVDDSFV…DVKRLKELIM (128 aa). Residue Asp79 is modified to 4-aspartylphosphate. The tract at residues 151–206 is disordered; sequence AEEGKTKKLSPKRILQNDIDSSPSSSSTSSSSSSHDVSSLDDDTPSSKRIKLESRG. Low complexity predominate over residues 168–187; sequence DIDSSPSSSSTSSSSSSHDV.

It belongs to the ARR family. Type-A subfamily. Post-translationally, two-component system major event consists of a His-to-Asp phosphorelay between a sensor histidine kinase (HK) and a response regulator (RR). In plants, the His-to-Asp phosphorelay involves an additional intermediate named Histidine-containing phosphotransfer protein (HPt). This multistep phosphorelay consists of a His-Asp-His-Asp sequential transfer of a phosphate group between first a His and an Asp of the HK protein, followed by the transfer to a conserved His of the HPt protein and finally the transfer to an Asp in the receiver domain of the RR protein.

The protein localises to the nucleus. Functions as a response regulator involved in His-to-Asp phosphorelay signal transduction system. Phosphorylation of the Asp residue in the receiver domain activates the ability of the protein to promote the transcription of target genes. Type-A response regulators seem to act as negative regulators of the cytokinin signaling. This chain is Two-component response regulator ARR15 (ARR15), found in Arabidopsis thaliana (Mouse-ear cress).